The chain runs to 75 residues: Large ribosomal subunit protein bL28 (75 aa).

Residues 1–21 (MARVCQVTGKRPMSGNKRSHA) are disordered.

The protein belongs to the bacterial ribosomal protein bL28 family.

This is Large ribosomal subunit protein bL28 from Blochmanniella pennsylvanica (strain BPEN).